We begin with the raw amino-acid sequence, 173 residues long: Dual-action ribosomal maturation protein DarP (173 aa).

The protein belongs to the DarP family.

It is found in the cytoplasm. In terms of biological role, member of a network of 50S ribosomal subunit biogenesis factors which assembles along the 30S-50S interface, preventing incorrect 23S rRNA structures from forming. Promotes peptidyl transferase center (PTC) maturation. The chain is Dual-action ribosomal maturation protein DarP from Pseudomonas fluorescens (strain ATCC BAA-477 / NRRL B-23932 / Pf-5).